The sequence spans 273 residues: Pyrroline-5-carboxylate reductase (273 aa).

The protein belongs to the pyrroline-5-carboxylate reductase family.

It is found in the cytoplasm. The catalysed reaction is L-proline + NADP(+) = (S)-1-pyrroline-5-carboxylate + NADPH + 2 H(+). The enzyme catalyses L-proline + NAD(+) = (S)-1-pyrroline-5-carboxylate + NADH + 2 H(+). It participates in amino-acid biosynthesis; L-proline biosynthesis; L-proline from L-glutamate 5-semialdehyde: step 1/1. In terms of biological role, catalyzes the reduction of 1-pyrroline-5-carboxylate (PCA) to L-proline. The sequence is that of Pyrroline-5-carboxylate reductase from Pseudomonas aeruginosa (strain ATCC 15692 / DSM 22644 / CIP 104116 / JCM 14847 / LMG 12228 / 1C / PRS 101 / PAO1).